A 509-amino-acid chain; its full sequence is DNA primase large subunit (509 aa).

Residues 253 to 270 (LSHSYTGQDYSTQGNVGK) are interdomain linker. The interacts with PRIM1 stretch occupies residues 266–509 (GNVGKISLDQ…GLEDYFSEDS (244 aa)). Residues cysteine 287, cysteine 367, cysteine 384, and cysteine 424 each contribute to the [4Fe-4S] cluster site. Positions 300–442 (HLRHGGRMQY…NVDDCGFSLN (143 aa)) are RNA:DNA duplex-binding. A disordered region spans residues 461-486 (IKKEPIQPETPQPKPSVQKTKDASSA). The residue at position 470 (threonine 470) is a Phosphothreonine.

This sequence belongs to the eukaryotic-type primase large subunit family. In terms of assembly, heterodimer of a catalytic subunit PRIM1 and a regulatory subunit PRIM2, also known as the DNA primase complex. Interacts via (C-terminus) with PRIM1. Component of the alpha DNA polymerase complex (also known as the alpha DNA polymerase-primase complex) consisting of four subunits: the catalytic subunit POLA1, the regulatory subunit POLA2, and the primase complex subunits PRIM1 and PRIM2 respectively. Within the complex, POLA1 directly interacts with PRIM2. The cofactor is [4Fe-4S] cluster.

Regulatory subunit of the DNA primase complex and component of the DNA polymerase alpha complex (also known as the alpha DNA polymerase-primase complex) which play an essential role in the initiation of DNA synthesis. During the S phase of the cell cycle, the DNA polymerase alpha complex (composed of a catalytic subunit POLA1, an accessory subunit POLA2 and two primase subunits, the catalytic subunit PRIM1 and the regulatory subunit PRIM2) is recruited to DNA at the replicative forks via direct interactions with MCM10 and WDHD1. The primase subunit of the polymerase alpha complex initiates DNA synthesis by oligomerising short RNA primers on both leading and lagging strands. These primers are initially extended by the polymerase alpha catalytic subunit and subsequently transferred to polymerase delta and polymerase epsilon for processive synthesis on the lagging and leading strand, respectively. In the primase complex, both subunits are necessary for the initial di-nucleotide formation, but the extension of the primer depends only on the catalytic subunit. Binds RNA:DNA duplex and coordinates the catalytic activities of PRIM1 and POLA2 during primase-to-polymerase switch. The protein is DNA primase large subunit (PRIM2) of Homo sapiens (Human).